Here is an 851-residue protein sequence, read N- to C-terminus: DNA mismatch repair protein MutS (851 aa).

602–609 lines the ATP pocket; that stretch reads GPNMSGKS.

Belongs to the DNA mismatch repair MutS family.

Its function is as follows. This protein is involved in the repair of mismatches in DNA. It is possible that it carries out the mismatch recognition step. This protein has a weak ATPase activity. In Streptococcus equi subsp. equi (strain 4047), this protein is DNA mismatch repair protein MutS.